A 436-amino-acid chain; its full sequence is GTPase Der (436 aa).

2 consecutive EngA-type G domains span residues 4-167 and 175-351; these read PTIA…PAQE and IKFS…ESQN. GTP-binding positions include 10-17, 57-61, 119-122, 181-188, 229-233, and 294-297; these read GRPNVGKS, DTGGI, NKVD, DTAGM, and NKWD. Positions 352–436 constitute a KH-like domain; that stretch reads TRIPSAVLND…PIHLIARKRK (85 aa).

It belongs to the TRAFAC class TrmE-Era-EngA-EngB-Septin-like GTPase superfamily. EngA (Der) GTPase family. Associates with the 50S ribosomal subunit.

In terms of biological role, GTPase that plays an essential role in the late steps of ribosome biogenesis. In Streptococcus suis (strain 98HAH33), this protein is GTPase Der.